Here is a 301-residue protein sequence, read N- to C-terminus: Acetylglutamate kinase (301 aa).

Substrate contacts are provided by residues 68–69 (GG), Arg90, and Asn195.

This sequence belongs to the acetylglutamate kinase family. ArgB subfamily.

The protein resides in the cytoplasm. It catalyses the reaction N-acetyl-L-glutamate + ATP = N-acetyl-L-glutamyl 5-phosphate + ADP. Its pathway is amino-acid biosynthesis; L-arginine biosynthesis; N(2)-acetyl-L-ornithine from L-glutamate: step 2/4. In terms of biological role, catalyzes the ATP-dependent phosphorylation of N-acetyl-L-glutamate. The protein is Acetylglutamate kinase of Ectopseudomonas mendocina (strain ymp) (Pseudomonas mendocina).